The following is a 63-amino-acid chain: Megourin-3 (63 aa).

Monomer. Post-translationally, contains four disulfide bonds.

The protein resides in the secreted. Its function is as follows. Has antimicrobial activity against Gram-positive bacteria and fungi. In Megoura viciae (Vetch aphid), this protein is Megourin-3.